A 197-amino-acid polypeptide reads, in one-letter code: MTQLIAGVDEVGRGPLVGDVVTAAVILDPAKPIAGLADSKKISEKKRLALFDIIMQNALAVCVGRASPQEIDELNILHATMLAMKRAVQGLATQPTFVRVDGNRCPNWDYASEAVVKGDSLFAEISAASIIAKVTRDAEMSELHNAHPEYGFAQHKGYPTKAHLEKLAELGPLSQYRMSFKPVQLSLMQRGGQLAGN.

Residues 3–192 (QLIAGVDEVG…VQLSLMQRGG (190 aa)) form the RNase H type-2 domain. A divalent metal cation-binding residues include Asp9, Glu10, and Asp101.

This sequence belongs to the RNase HII family. Mn(2+) is required as a cofactor. It depends on Mg(2+) as a cofactor.

It is found in the cytoplasm. The catalysed reaction is Endonucleolytic cleavage to 5'-phosphomonoester.. Functionally, endonuclease that specifically degrades the RNA of RNA-DNA hybrids. This Pseudoalteromonas atlantica (strain T6c / ATCC BAA-1087) protein is Ribonuclease HII.